We begin with the raw amino-acid sequence, 445 residues long: 3-phosphoshikimate 1-carboxyvinyltransferase (445 aa).

Residues lysine 21, serine 22, and arginine 26 each coordinate 3-phosphoshikimate. A phosphoenolpyruvate-binding site is contributed by lysine 21. Residues glycine 92 and arginine 120 each coordinate phosphoenolpyruvate. Residues serine 165, glutamine 166, aspartate 307, and lysine 334 each contribute to the 3-phosphoshikimate site. A phosphoenolpyruvate-binding site is contributed by glutamine 166. Aspartate 307 serves as the catalytic Proton acceptor. Arginine 338, arginine 379, and lysine 405 together coordinate phosphoenolpyruvate.

Belongs to the EPSP synthase family. In terms of assembly, monomer.

The protein resides in the cytoplasm. The catalysed reaction is 3-phosphoshikimate + phosphoenolpyruvate = 5-O-(1-carboxyvinyl)-3-phosphoshikimate + phosphate. Its pathway is metabolic intermediate biosynthesis; chorismate biosynthesis; chorismate from D-erythrose 4-phosphate and phosphoenolpyruvate: step 6/7. Functionally, catalyzes the transfer of the enolpyruvyl moiety of phosphoenolpyruvate (PEP) to the 5-hydroxyl of shikimate-3-phosphate (S3P) to produce enolpyruvyl shikimate-3-phosphate and inorganic phosphate. In Chlamydia felis (strain Fe/C-56) (Chlamydophila felis), this protein is 3-phosphoshikimate 1-carboxyvinyltransferase.